A 258-amino-acid chain; its full sequence is Glutamate racemase (258 aa).

Substrate contacts are provided by residues 12-13 (DS) and 44-45 (YG). Residue Cys-75 is the Proton donor/acceptor of the active site. Residue 76–77 (NT) coordinates substrate. Cys-186 serves as the catalytic Proton donor/acceptor. 187-188 (TH) contacts substrate.

This sequence belongs to the aspartate/glutamate racemases family.

The catalysed reaction is L-glutamate = D-glutamate. It functions in the pathway cell wall biogenesis; peptidoglycan biosynthesis. Provides the (R)-glutamate required for cell wall biosynthesis. The protein is Glutamate racemase of Clostridium botulinum (strain Alaska E43 / Type E3).